The following is a 306-amino-acid chain: Hydroxypyruvate reductase (306 aa).

NAD(+) contacts are provided by residues 152–153 (NI), Asp172, 228–230 (TAR), and Asp254. Arg230 is an active-site residue. The active site involves Glu259. His280 (proton donor) is an active-site residue. 280 to 283 (HIGA) lines the NAD(+) pocket.

This sequence belongs to the D-isomer specific 2-hydroxyacid dehydrogenase family.

The catalysed reaction is (R)-glycerate + NAD(+) = 3-hydroxypyruvate + NADH + H(+). It carries out the reaction (R)-glycerate + NADP(+) = 3-hydroxypyruvate + NADPH + H(+). In terms of biological role, involved in the degradation of L-serine via 3-hydroxypyruvate. Catalyzes the non-reversible reduction of 3-hydroxypyruvate to yield D-glycerate. This is Hydroxypyruvate reductase from Thermotoga maritima (strain ATCC 43589 / DSM 3109 / JCM 10099 / NBRC 100826 / MSB8).